The primary structure comprises 127 residues: Glycine cleavage system H protein (127 aa).

Residues 22–104 (KVRIGITDFA…YEKAWMIVIE (83 aa)) form the Lipoyl-binding domain. K63 is subject to N6-lipoyllysine.

The protein belongs to the GcvH family. In terms of assembly, the glycine cleavage system is composed of four proteins: P, T, L and H. (R)-lipoate serves as cofactor.

In terms of biological role, the glycine cleavage system catalyzes the degradation of glycine. The H protein shuttles the methylamine group of glycine from the P protein to the T protein. Functionally, is also involved in protein lipoylation via its role as an octanoyl/lipoyl carrier protein intermediate. The sequence is that of Glycine cleavage system H protein from Geobacillus thermodenitrificans (strain NG80-2).